The primary structure comprises 478 residues: Glutamate--tRNA ligase (478 aa).

The short motif at 15 to 25 is the 'HIGH' region element; sequence PSPTGFLHIGG. A 'KMSKS' region motif is present at residues 244-248; it reads KLSKR. An ATP-binding site is contributed by K247.

Belongs to the class-I aminoacyl-tRNA synthetase family. Glutamate--tRNA ligase type 1 subfamily. In terms of assembly, monomer.

The protein localises to the cytoplasm. It catalyses the reaction tRNA(Glu) + L-glutamate + ATP = L-glutamyl-tRNA(Glu) + AMP + diphosphate. In terms of biological role, catalyzes the attachment of glutamate to tRNA(Glu) in a two-step reaction: glutamate is first activated by ATP to form Glu-AMP and then transferred to the acceptor end of tRNA(Glu). The polypeptide is Glutamate--tRNA ligase (Bradyrhizobium sp. (strain ORS 278)).